The following is a 545-amino-acid chain: T-complex protein 1 subunit alpha (545 aa).

Position 2 is an N-acetylserine (S2).

The protein belongs to the TCP-1 chaperonin family. As to quaternary structure, heterooligomeric complex of about 850 to 900 kDa that forms two stacked rings, 12 to 16 nm in diameter.

Its subcellular location is the cytoplasm. Functionally, molecular chaperone; assists the folding of proteins upon ATP hydrolysis. Known to play a role, in vitro, in the folding of actin and tubulin. The chain is T-complex protein 1 subunit alpha from Arabidopsis thaliana (Mouse-ear cress).